A 235-amino-acid chain; its full sequence is MARPLVPSSQKALLLELKGLQEEPVEGFRVTLVDEGDLYNWEVAIFGPPNTYYEGGYFKARLKFPIDYPYSPPAFRFLTKMWHPNIYETGDVCISILHPPVDDPQSGELPSERWNPTQNVRTILLSVISLLNEPNTFSPANVDASVMYRKWKESKGKDREYTDIIRKQVLGTKVDAERDGVKVPTTLAEYCVKTKAPAPDEGSDLFYDDYYEDGEVEEADSCFGDEEDDSGTEES.

The UBC core domain maps to 8-174; it reads SSQKALLLEL…IRKQVLGTKV (167 aa). Cys-93 acts as the Glycyl thioester intermediate in catalysis. An important for ubiquitin transfer region spans residues 98-113; that stretch reads HPPVDDPQSGELPSER. The segment at 190-235 is SCF-binding; that stretch reads YCVKTKAPAPDEGSDLFYDDYYEDGEVEEADSCFGDEEDDSGTEES. Ser-203, Ser-221, and Ser-230 each carry phosphoserine; by CK2. Thr-232 is subject to Phosphothreonine; by CK2. Ser-235 is subject to Phosphoserine; by CK2.

The protein belongs to the ubiquitin-conjugating enzyme family. As to quaternary structure, interacts with multiple Cul1-RING E3 ubiquitin-protein ligase complexes, also known as SCF (SKP1-CUL1-F-box protein) complexes. Identified in a SCF (SKP1-CUL1-F-box protein) E3 ubiquitin ligase complex together with HINT1 and RBX1. When cullin is neddylated, the interaction between the E2 and the SCF complex is strengthened. Interacts with multiple Cul2-RING (CRL2) E3 ubiquitin-protein ligase complexes, also known as ECS (Elongin BC-CUL2/5-SOCS-box protein) complexes. When phosphorylated, interacts with beta-TrCP (BTRC). Interacts with casein kinase subunit CSNK2B. Interacts with CNTD1; this interaction regulates the cell-cycle progression. Phosphorylated by CK2. Phosphorylation of the C-terminal tail by CK2 controls the nuclear localization.

It localises to the cytoplasm. It is found in the nucleus. It catalyses the reaction S-ubiquitinyl-[E1 ubiquitin-activating enzyme]-L-cysteine + [E2 ubiquitin-conjugating enzyme]-L-cysteine = [E1 ubiquitin-activating enzyme]-L-cysteine + S-ubiquitinyl-[E2 ubiquitin-conjugating enzyme]-L-cysteine.. It carries out the reaction S-ubiquitinyl-[E1 ubiquitin-activating enzyme]-L-cysteine + [acceptor protein]-L-lysine = [E1 ubiquitin-activating enzyme]-L-cysteine + N(6)-monoubiquitinyl-[acceptor protein]-L-lysine.. It participates in protein modification; protein ubiquitination. CDC34-catalyzed polyubiquitin chain assembly activity is stimulated by the conjugation of NEDD8 to the CUL1 SCF E3 ligase complex subunit. Its function is as follows. E2 ubiquitin-conjugating enzyme that accepts ubiquitin from an E1 ubiquitin-activating protein, and catalyzes its covalent attachment to other proteins by an E3 ubiquitin-protein ligase complex. In vitro catalyzes 'Lys-48'-linked polyubiquitination. Cooperates with the E2 UBCH5C and the SCF(FBXW11) E3 ligase complex for the polyubiquitination of NFKBIA leading to its subsequent proteasomal degradation. Performs ubiquitin chain elongation building ubiquitin chains from the UBE2D3-primed NFKBIA-linked ubiquitin. UBE2D3 acts as an initiator E2, priming the phosphorylated NFKBIA target at positions 'Lys-21' and/or 'Lys-22' with a monoubiquitin. Cooperates with the SCF(SKP2) E3 ligase complex to regulate cell proliferation through ubiquitination and degradation of MYBL2 and KIP1. Involved in ubiquitin conjugation and degradation of CREM isoform ICERIIgamma and ATF15 resulting in abrogation of ICERIIgamma- and ATF5-mediated repression of cAMP-induced transcription during both meiotic and mitotic cell cycles. Involved in the regulation of the cell cycle G2/M phase through its targeting of the WEE1 kinase for ubiquitination and degradation. Also involved in the degradation of beta-catenin. This Mus musculus (Mouse) protein is Ubiquitin-conjugating enzyme E2 R1 (Cdc34).